Reading from the N-terminus, the 419-residue chain is UDP-N-acetylglucosamine 1-carboxyvinyltransferase (419 aa).

22-23 (KN) is a binding site for phosphoenolpyruvate. UDP-N-acetyl-alpha-D-glucosamine is bound at residue arginine 92. The Proton donor role is filled by cysteine 116. 2-(S-cysteinyl)pyruvic acid O-phosphothioketal is present on cysteine 116. UDP-N-acetyl-alpha-D-glucosamine-binding positions include 121-125 (RPIDL), aspartate 307, and leucine 329.

This sequence belongs to the EPSP synthase family. MurA subfamily.

The protein resides in the cytoplasm. It carries out the reaction phosphoenolpyruvate + UDP-N-acetyl-alpha-D-glucosamine = UDP-N-acetyl-3-O-(1-carboxyvinyl)-alpha-D-glucosamine + phosphate. It participates in cell wall biogenesis; peptidoglycan biosynthesis. Its function is as follows. Cell wall formation. Adds enolpyruvyl to UDP-N-acetylglucosamine. This Campylobacter fetus subsp. fetus (strain 82-40) protein is UDP-N-acetylglucosamine 1-carboxyvinyltransferase.